The primary structure comprises 228 residues: 6-carboxyhexanoate--CoA ligase (228 aa).

The protein belongs to the BioW family. As to quaternary structure, homodimer. It depends on Mg(2+) as a cofactor.

It catalyses the reaction heptanedioate + ATP + CoA = 6-carboxyhexanoyl-CoA + AMP + diphosphate. Its pathway is metabolic intermediate metabolism; pimeloyl-CoA biosynthesis; pimeloyl-CoA from pimelate: step 1/1. In terms of biological role, catalyzes the transformation of pimelate into pimeloyl-CoA with concomitant hydrolysis of ATP to AMP. In Staphylococcus epidermidis (strain ATCC 35984 / DSM 28319 / BCRC 17069 / CCUG 31568 / BM 3577 / RP62A), this protein is 6-carboxyhexanoate--CoA ligase.